The chain runs to 257 residues: tRNA dimethylallyltransferase (257 aa).

An ATP-binding site is contributed by 15-22 (GPTASGKS). 17–22 (TASGKS) contributes to the substrate binding site.

This sequence belongs to the IPP transferase family. In terms of assembly, monomer. Requires Mg(2+) as cofactor.

The enzyme catalyses adenosine(37) in tRNA + dimethylallyl diphosphate = N(6)-dimethylallyladenosine(37) in tRNA + diphosphate. Catalyzes the transfer of a dimethylallyl group onto the adenine at position 37 in tRNAs that read codons beginning with uridine, leading to the formation of N6-(dimethylallyl)adenosine (i(6)A). This chain is tRNA dimethylallyltransferase, found in Oenococcus oeni (strain ATCC BAA-331 / PSU-1).